A 569-amino-acid polypeptide reads, in one-letter code: Laccase-6 (569 aa).

Positions 1–29 are cleaved as a signal peptide; sequence MTSSAVPSLFRLSFLLFTLQVMNIGRIGA. Plastocyanin-like domains are found at residues 37–153 and 163–315; these read KVQT…PKAS and NEHT…YIGA. N-linked (GlcNAc...) asparagine glycosylation is present at N83. Residues H87, H89, H132, and H134 each contribute to the Cu cation site. Residues N208, N303, N319, N392, N438, and N444 are each glycosylated (N-linked (GlcNAc...) asparagine). Positions 417–553 constitute a Plastocyanin-like 3 domain; it reads DFPTTPEKAY…STMFIVKNGK (137 aa). Cu cation-binding residues include H472, H475, H477, H532, C533, H534, H538, and M543.

This sequence belongs to the multicopper oxidase family. Cu cation serves as cofactor. As to expression, predominantly expressed in the inflorescence stem, but not in siliques.

Its subcellular location is the secreted. The protein localises to the extracellular space. It localises to the apoplast. The catalysed reaction is 4 hydroquinone + O2 = 4 benzosemiquinone + 2 H2O. In terms of biological role, lignin degradation and detoxification of lignin-derived products. In Arabidopsis thaliana (Mouse-ear cress), this protein is Laccase-6 (LAC6).